A 551-amino-acid polypeptide reads, in one-letter code: Transcription factor 7-like 1-B (551 aa).

Gly residues predominate over residues 1-11; the sequence is MPQLNGGGGDE. Disordered regions lie at residues 1 to 76, 298 to 326, and 392 to 525; these read MPQL…DLES, QEPN…KPHI, and GWSA…PPSP. Residues 19-32 are compositionally biased toward basic and acidic residues; that stretch reads ISFKDEGEQEDKIS. Over residues 46-61 the composition is skewed to low complexity; the sequence is SSLVSESENNSSSSDS. The segment covering 63 to 76 has biased composition (basic and acidic residues); the sequence is QTERRPQPRADLES. The segment at residues 326 to 394 is a DNA-binding region (HMG box); it reads IKKPLNAFML…LHSQLYPGWS (69 aa). The span at 449-468 shows a compositional bias: low complexity; sequence SPATPSAALASPAAPAATHS. Positions 469 to 478 are enriched in polar residues; that stretch reads EQAQPLSLTT. A compositionally biased stretch (low complexity) spans 493–505; the sequence is SSSSSSSSSSSGL.

Belongs to the TCF/LEF family. Interacts with ctnnb1.

The protein localises to the nucleus. In terms of biological role, participates in the Wnt signaling pathway. Probably binds to DNA and acts as a repressor in the absence of ctnnb1, and possibly as an activator in its presence. Regulates anterior-posterior patterning in the neuroectoderm by repressing posterior neural fates. Also required for hindbrain morphogenesis. This is Transcription factor 7-like 1-B (tcf7l1b) from Danio rerio (Zebrafish).